Consider the following 313-residue polypeptide: Acetaldehyde dehydrogenase (313 aa).

15–18 is an NAD(+) binding site; sequence SGNI. Cys-133 serves as the catalytic Acyl-thioester intermediate. NAD(+) is bound by residues 164–172 and Asn-289; that span reads SAGPGTRAN.

The protein belongs to the acetaldehyde dehydrogenase family.

It catalyses the reaction acetaldehyde + NAD(+) + CoA = acetyl-CoA + NADH + H(+). This is Acetaldehyde dehydrogenase from Rhizobium rhizogenes (strain K84 / ATCC BAA-868) (Agrobacterium radiobacter).